The sequence spans 142 residues: MSLRPCLTPSSMQYSDIYIHTTPHPHTPHHTHHTHTTPTPTPHPHTHTPTPERSLSLRLRQAKPDQPVSQITLHYPTSPLVTLTHSTIPPQPPSISLCTTTNRPSTITVTLQLPISNSTTTYPTISHLLLTILLFYPPLLKR.

The segment at 19 to 54 is disordered; sequence IHTTPHPHTPHHTHHTHTTPTPTPHPHTHTPTPERS. Over residues 26–35 the composition is skewed to basic residues; the sequence is HTPHHTHHTH.

This is an uncharacterized protein from Saccharomyces cerevisiae (strain ATCC 204508 / S288c) (Baker's yeast).